We begin with the raw amino-acid sequence, 393 residues long: Sex hormone-binding globulin (393 aa).

Positions 1–27 (MEGRGPLATSPRRRWLLLLLLLPHSHQ) are cleaved as a signal peptide. Laminin G-like domains follow at residues 35–208 (VHLS…PRSC) and 215–381 (GSFF…THSC). Cystine bridges form between C183/C208 and C353/C381. N-linked (GlcNAc...) asparagine glycosylation is found at N371 and N387.

As to quaternary structure, homodimer.

It localises to the secreted. Its function is as follows. Functions as an androgen transport protein, but may also be involved in receptor mediated processes. Each dimer binds one molecule of steroid. Specific for 5-alpha-dihydrotestosterone, testosterone, and 17-beta-estradiol. Regulates the plasma metabolic clearance rate of steroid hormones by controlling their plasma concentration. The sequence is that of Sex hormone-binding globulin (SHBG) from Crocuta crocuta (Spotted hyena).